Consider the following 979-residue polypeptide: Mast/stem cell growth factor receptor Kit (979 aa).

Positions 1-24 (MRGARGAWDLLCVLLVLLRGQTAT) are cleaved as a signal peptide. At 25 to 527 (SQPSASPGEP…QIQAHTLFTP (503 aa)) the chain is on the extracellular side. Ig-like C2-type domains follow at residues 31 to 117 (PGEP…DPAK), 126 to 210 (FGKE…AAIK), and 217 to 315 (VPET…EKGF). 4 disulfide bridges follow: Cys-58/Cys-98, Cys-137/Cys-187, Cys-152/Cys-184, and Cys-234/Cys-293. Asn-146 carries N-linked (GlcNAc...) asparagine glycosylation. 7 N-linked (GlcNAc...) asparagine glycosylation sites follow: Asn-296, Asn-303, Asn-323, Asn-355, Asn-370, Asn-466, and Asn-489. Ig-like C2-type domains follow at residues 324–417 (TTVF…TKPE) and 420–514 (TYDR…FKGN). A disulfide bridge connects residues Cys-431 and Cys-494. A helical membrane pass occupies residues 528-548 (LLIGFVVAAGAMGIIVMVLTY). The Cytoplasmic portion of the chain corresponds to 549 to 979 (KYLQKPMYEV…TQPLLVHEDA (431 aa)). Phosphotyrosine; by autocatalysis occurs at positions 550 and 556. A Mg(2+)-binding site is contributed by Tyr-571. A phosphotyrosine mark is found at Tyr-571 and Tyr-573. The tract at residues 571–573 (YVY) is important for interaction with phosphotyrosine-binding proteins. Residues 592-939 (LSFGKTLGAG…ISDSTKHIYS (348 aa)) form the Protein kinase domain. Residues 599 to 606 (GAGAFGKV), Lys-626, and 674 to 680 (EYCCYGD) each bind ATP. Position 706 is a phosphotyrosine (Tyr-706). Ser-720 is subject to Phosphoserine. Tyr-723 and Tyr-732 each carry phosphotyrosine; by autocatalysis. Ser-743 and Ser-748 each carry phosphoserine; by PKC/PRKCA. The active-site Proton acceptor is Asp-794. An ATP-binding site is contributed by Arg-798. Mg(2+) contacts are provided by Asn-799 and Asp-812. Ser-823 bears the Phosphoserine mark. The residue at position 825 (Tyr-825) is a Phosphotyrosine; by autocatalysis. Residue Ser-893 is modified to Phosphoserine. A Phosphotyrosine; by autocatalysis modification is found at Tyr-902. Tyr-938 is subject to Phosphotyrosine. Ser-962 carries the post-translational modification Phosphoserine.

The protein belongs to the protein kinase superfamily. Tyr protein kinase family. CSF-1/PDGF receptor subfamily. As to quaternary structure, monomer in the absence of bound KITLG/SCF. Homodimer in the presence of bound KITLG/SCF, forming a heterotetramer with two KITLG/SCF molecules. Interacts (via phosphorylated tyrosine residues) with the adapter proteins GRB2 and GRB7 (via SH2 domain), and SH2B2/APS. Interacts (via C-terminus) with MPDZ (via the tenth PDZ domain). Interacts (via phosphorylated tyrosine residues) with the protein phosphatases PTPN6/SHP-1 (via SH2 domain), PTPN11/SHP-2 (via SH2 domain) and PTPRU. Interacts with DOK1 and TEC. Interacts with the protein kinase FES/FPS. Interacts with PLCG1. Interacts (via phosphorylated tyrosine residues) with PIK3R1 and PIK3 catalytic subunit. Interacts (KITLG/SCF-bound) with IL1RL1. Interacts with IL1RAP (independent of stimulation with KITLG/SCF). A mast cell-specific KITLG/SCF-induced interleukin-33 signaling complex contains IL1RL1, IL1RAP, KIT and MYD88. Ubiquitinated by SOCS6. KIT is rapidly ubiquitinated after autophosphorylation induced by KITLG/SCF binding, leading to internalization and degradation. Post-translationally, autophosphorylated on tyrosine residues. KITLG/SCF binding promotes autophosphorylation of isoform 1 and isoform 2. Isoform 1 shows low levels of tyrosine phosphorylation in the absence of added KITLG/SCF, while isoform 2 requires stimulation by KITLG/SCF for phosphorylation (in vitro). Phosphorylation of Tyr-573 is required for interaction with PTPN6/SHP-1. Phosphorylation of Tyr-571 is required for interaction with PTPN11/SHP-2. Phosphorylated tyrosine residues are important for interaction with specific binding partners. In terms of tissue distribution, isoform 1 and isoform 2 are detected in bone marrow cells, spermatogonia and spermatocytes, but not in round spermatids, elongating spermatids and spermatozoa. Isoform 3 is detected in round spermatids, elongating spermatids and spermatozoa, but not in spermatogonia and spermatocytes (at protein level). Isoform 1 is widely expressed and detected in fetal liver and bone marrow. Isoform 3 is detected in bone marrow cells enriched in hematopoietic stem cells.

Its subcellular location is the cell membrane. It localises to the cytoplasm. The enzyme catalyses L-tyrosyl-[protein] + ATP = O-phospho-L-tyrosyl-[protein] + ADP + H(+). With respect to regulation, present in an inactive conformation in the absence of bound ligand. KITLG/SCF binding leads to dimerization and activation by autophosphorylation. In terms of biological role, tyrosine-protein kinase that acts as a cell-surface receptor for the cytokine KITLG/SCF and plays an essential role in the regulation of cell survival and proliferation, hematopoiesis, stem cell maintenance, gametogenesis, mast cell development, migration and function, and in melanogenesis. In response to KITLG/SCF binding, KIT can activate several signaling pathways. Phosphorylates PIK3R1, PLCG1, SH2B2/APS and CBL. Activates the AKT1 signaling pathway by phosphorylation of PIK3R1, the regulatory subunit of phosphatidylinositol 3-kinase. Activated KIT also transmits signals via GRB2 and activation of RAS, RAF1 and the MAP kinases MAPK1/ERK2 and/or MAPK3/ERK1. Promotes activation of STAT family members STAT1, STAT3, STAT5A and STAT5B. Activation of PLCG1 leads to the production of the cellular signaling molecules diacylglycerol and inositol 1,4,5-trisphosphate. KIT signaling is modulated by protein phosphatases, and by rapid internalization and degradation of the receptor. Activated KIT promotes phosphorylation of the protein phosphatases PTPN6/SHP-1 and PTPRU, and of the transcription factors STAT1, STAT3, STAT5A and STAT5B. Promotes phosphorylation of PIK3R1, CBL, CRK (isoform Crk-II), LYN, MAPK1/ERK2 and/or MAPK3/ERK1, PLCG1, SRC and SHC1. The chain is Mast/stem cell growth factor receptor Kit (Kit) from Mus musculus (Mouse).